The sequence spans 170 residues: Calcineurin subunit B type 2 (170 aa).

EF-hand domains follow at residues 18–46 (DEIR…FMSL), 50–85 (QQNP…FSVK), 87–122 (DKLS…MVGN), and 128–163 (QLQQ…TDIH). Residues D31, D33, S35, E42, D63, D65, N67, E69, E74, D100, D102, D104, Y106, E111, D141, D143, D145, K147, and E152 each coordinate Ca(2+). S35 is modified (phosphoserine).

Belongs to the calcineurin regulatory subunit family. In terms of assembly, composed of a catalytic subunit (A) and a regulatory subunit (B). Interacts with sra.

Calcineurin is a calcium-binding and calmodulin-binding protein found in all cells from yeast to mammals, and a calcium-dependent, calmodulin-stimulated protein phosphatase. The polypeptide is Calcineurin subunit B type 2 (CanB2) (Drosophila melanogaster (Fruit fly)).